Consider the following 129-residue polypeptide: Lysozyme C-1/C-2 (129 aa).

The C-type lysozyme domain occupies Lys-1–Leu-129. 4 cysteine pairs are disulfide-bonded: Cys-6–Cys-127, Cys-30–Cys-115, Cys-65–Cys-81, and Cys-77–Cys-95. Catalysis depends on residues Glu-35 and Asp-53.

It belongs to the glycosyl hydrolase 22 family. Monomer.

It carries out the reaction Hydrolysis of (1-&gt;4)-beta-linkages between N-acetylmuramic acid and N-acetyl-D-glucosamine residues in a peptidoglycan and between N-acetyl-D-glucosamine residues in chitodextrins.. In terms of biological role, lysozymes have primarily a bacteriolytic function; those in tissues and body fluids are associated with the monocyte-macrophage system and enhance the activity of immunoagents. This is Lysozyme C-1/C-2 from Axis axis (Axis deer).